Reading from the N-terminus, the 202-residue chain is Matrix protein (202 aa).

A PPXY motif motif is present at residues 35–38 (PPEY). Positions 115-151 (KLRRTLIFQWADSRGPLEGEELEYSQEITWDDDTEFV) are essential for glycoprotein binding.

Belongs to the lyssavirus matrix protein family. Homomultimer. Interacts with nucleoprotein and with the cytoplasmic domain of glycoprotein. Interacts with host ATP6V1A; this interaction plays an important role in virion uncoating after viral entry.

It is found in the virion membrane. The protein resides in the host endomembrane system. Its subcellular location is the host cytoplasm. Functionally, plays a major role in assembly, budding and uncoating of virion after membrane fusion. Completely covers the ribonucleoprotein coil and keep it in condensed bullet-shaped form. Inhibits viral transcription and stimulates replication. Plays a major role in early induction of TRAIL-mediated apoptosis in infected neurons. Inhibits the integrated stress response (ISR) in the infected cell by blocking the formation of stress granules. The chain is Matrix protein (M) from Rabies virus (strain CVS-11) (RABV).